The chain runs to 353 residues: Photosystem II D2 protein (353 aa).

At threonine 2 the chain carries N-acetylthreonine. Threonine 2 bears the Phosphothreonine mark. Residues 41 to 61 (CAYFALGGWFTGTTFVTSWYT) traverse the membrane as a helical segment. Residue histidine 118 participates in chlorophyll a binding. Residues 125–141 (GFMLRQFELARSVQLRP) form a helical membrane-spanning segment. The pheophytin a site is built by glutamine 130 and asparagine 143. Residues 153 to 166 (VFVSVFLIYPLGQS) traverse the membrane as a helical segment. Histidine 198 lines the chlorophyll a pocket. The helical transmembrane segment at 208 to 228 (AALLCAIHGATVENTLFEDGD) threads the bilayer. A plastoquinone-binding residues include histidine 215 and phenylalanine 262. Residue histidine 215 participates in Fe cation binding. Histidine 269 contacts Fe cation. The helical transmembrane segment at 279–295 (GLWMSALGVVGLALNLR) threads the bilayer.

This sequence belongs to the reaction center PufL/M/PsbA/D family. As to quaternary structure, PSII is composed of 1 copy each of membrane proteins PsbA, PsbB, PsbC, PsbD, PsbE, PsbF, PsbH, PsbI, PsbJ, PsbK, PsbL, PsbM, PsbT, PsbX, PsbY, PsbZ, Psb30/Ycf12, at least 3 peripheral proteins of the oxygen-evolving complex and a large number of cofactors. It forms dimeric complexes. Requires The D1/D2 heterodimer binds P680, chlorophylls that are the primary electron donor of PSII, and subsequent electron acceptors. It shares a non-heme iron and each subunit binds pheophytin, quinone, additional chlorophylls, carotenoids and lipids. There is also a Cl(-1) ion associated with D1 and D2, which is required for oxygen evolution. The PSII complex binds additional chlorophylls, carotenoids and specific lipids. as cofactor.

The protein localises to the plastid. It is found in the chloroplast thylakoid membrane. It catalyses the reaction 2 a plastoquinone + 4 hnu + 2 H2O = 2 a plastoquinol + O2. Functionally, photosystem II (PSII) is a light-driven water:plastoquinone oxidoreductase that uses light energy to abstract electrons from H(2)O, generating O(2) and a proton gradient subsequently used for ATP formation. It consists of a core antenna complex that captures photons, and an electron transfer chain that converts photonic excitation into a charge separation. The D1/D2 (PsbA/PsbD) reaction center heterodimer binds P680, the primary electron donor of PSII as well as several subsequent electron acceptors. D2 is needed for assembly of a stable PSII complex. This Platanus occidentalis (Sycamore) protein is Photosystem II D2 protein.